A 219-amino-acid chain; its full sequence is MRMTRDGKEHEYKKGLWTVEEDKILMDYVRTHGQGHWNRIAKKTGLKRCGKSCRLRWMNYLSPNVNRGNFTDQEEDLIIRLHKLLGNRWSLIAKRVPGRTDNQVKNYWNTHLSKKLGLGDHSTAVKAACGVESPPSMALITTTSSSHQEISGGKNSTLRFDTLVDESKLKPKSKLVHATPTDVEVAATVPNLFDTFWVLEDDFELSSLTMMDFTNGYCL.

2 HTH myb-type domains span residues 9–61 (EHEY…MNYL) and 62–116 (SPNV…SKKL). DNA-binding regions (H-T-H motif) lie at residues 37 to 61 (WNRIAKKTGLKRCGKSCRLRWMNYL) and 89 to 112 (WSLIAKRVPGRTDNQVKNYWNTHL).

As to quaternary structure, interacts with BHLH2/EGL3/MYC146, BHLH12/MYC1 and GL3. In terms of tissue distribution, expressed in roots, seed coats, leaves, stems and flowers. Detected specifically in trichomes, and in the cell division and differentiation zone of the root.

It localises to the nucleus. Its function is as follows. Transcription activator, when associated with BHLH2/EGL3/MYC146 or BHLH12/MYC1. Regulates the epidermal cell fate specification. Mediates the formation of columellae and accumulation of mucilages on seed coats. Controls the elongation of epidermal cells positively in roots but negatively in stems, leading to the promotion of primary roots elongation and repression of leaves and stems elongation, respectively. Ovoids ectopic root-hair formation, probably by inducing GL2 in roots. Controls trichome initiation and branching. The sequence is that of Transcription factor MYB23 (MYB23) from Arabidopsis thaliana (Mouse-ear cress).